The chain runs to 367 residues: MLGLGPQQAAFEAALGALPDRLLDTPVGVAVSGGSDSLALLILAHRWAARRGRVLRALTVDHGLRPESRAEAEAVGRLCADMGIEHDILRLEGAAPRQSALRRGRHAALARTIADKSGHLLLTGHTADDQAETFLMRARQGSGWYGLAGMRPLSLSPVWPEGEGVFIARPLLGIRREALRAFLRDEGLGWADDPSNDNPAFERVRMRRLLCPEMSRNVPVLSLVDRFQTLRMIEDGAIWRWMTANVRAGEAGIHVASFAGHPPERAARALGMLLQIAAGREMPPRGESLRRLAEEIVSKGDFRGATLGGCRITARRTHICLKPECGPLPPGTAARLAATQAILSGNPNEIAASAGKESFLEDLVPIF.

S32–S37 provides a ligand contact to ATP.

Belongs to the tRNA(Ile)-lysidine synthase family.

The protein localises to the cytoplasm. It catalyses the reaction cytidine(34) in tRNA(Ile2) + L-lysine + ATP = lysidine(34) in tRNA(Ile2) + AMP + diphosphate + H(+). In terms of biological role, ligates lysine onto the cytidine present at position 34 of the AUA codon-specific tRNA(Ile) that contains the anticodon CAU, in an ATP-dependent manner. Cytidine is converted to lysidine, thus changing the amino acid specificity of the tRNA from methionine to isoleucine. This is tRNA(Ile)-lysidine synthase from Hyphomonas neptunium (strain ATCC 15444).